The chain runs to 378 residues: Acetylornithine deacetylase (378 aa).

Histidine 76 serves as a coordination point for Zn(2+). The active site involves aspartate 78. Residue aspartate 108 participates in Zn(2+) binding. Residue glutamate 140 is part of the active site. The Zn(2+) site is built by glutamate 141, glutamate 165, and histidine 351.

This sequence belongs to the peptidase M20A family. ArgE subfamily. As to quaternary structure, homodimer. The cofactor is Zn(2+). It depends on Co(2+) as a cofactor. Glutathione is required as a cofactor.

It localises to the cytoplasm. It carries out the reaction N(2)-acetyl-L-ornithine + H2O = L-ornithine + acetate. It functions in the pathway amino-acid biosynthesis; L-arginine biosynthesis; L-ornithine from N(2)-acetyl-L-ornithine (linear): step 1/1. In terms of biological role, catalyzes the hydrolysis of the amide bond of N(2)-acetylated L-amino acids. Cleaves the acetyl group from N-acetyl-L-ornithine to form L-ornithine, an intermediate in L-arginine biosynthesis pathway, and a branchpoint in the synthesis of polyamines. The sequence is that of Acetylornithine deacetylase from Vibrio cholerae serotype O1 (strain ATCC 39541 / Classical Ogawa 395 / O395).